The primary structure comprises 364 residues: Dual-specificity RNA methyltransferase RlmN (364 aa).

The active-site Proton acceptor is Glu91. One can recognise a Radical SAM core domain in the interval 97 to 333 (ESDRGTLCIS…VTVRKTRGDD (237 aa)). Residues Cys104 and Cys338 are joined by a disulfide bond. The [4Fe-4S] cluster site is built by Cys111, Cys115, and Cys118. Residues 164–165 (GE), Ser196, 218–220 (SLH), and Asn295 contribute to the S-adenosyl-L-methionine site. Cys338 serves as the catalytic S-methylcysteine intermediate.

Belongs to the radical SAM superfamily. RlmN family. [4Fe-4S] cluster serves as cofactor.

Its subcellular location is the cytoplasm. It catalyses the reaction adenosine(2503) in 23S rRNA + 2 reduced [2Fe-2S]-[ferredoxin] + 2 S-adenosyl-L-methionine = 2-methyladenosine(2503) in 23S rRNA + 5'-deoxyadenosine + L-methionine + 2 oxidized [2Fe-2S]-[ferredoxin] + S-adenosyl-L-homocysteine. The catalysed reaction is adenosine(37) in tRNA + 2 reduced [2Fe-2S]-[ferredoxin] + 2 S-adenosyl-L-methionine = 2-methyladenosine(37) in tRNA + 5'-deoxyadenosine + L-methionine + 2 oxidized [2Fe-2S]-[ferredoxin] + S-adenosyl-L-homocysteine. Its function is as follows. Specifically methylates position 2 of adenine 2503 in 23S rRNA and position 2 of adenine 37 in tRNAs. m2A2503 modification seems to play a crucial role in the proofreading step occurring at the peptidyl transferase center and thus would serve to optimize ribosomal fidelity. This chain is Dual-specificity RNA methyltransferase RlmN, found in Neisseria gonorrhoeae (strain ATCC 700825 / FA 1090).